The primary structure comprises 130 residues: Large ribosomal subunit protein bL12 (130 aa).

It belongs to the bacterial ribosomal protein bL12 family. In terms of assembly, homodimer. Part of the ribosomal stalk of the 50S ribosomal subunit. Forms a multimeric L10(L12)X complex, where L10 forms an elongated spine to which 2 to 4 L12 dimers bind in a sequential fashion. Binds GTP-bound translation factors.

Forms part of the ribosomal stalk which helps the ribosome interact with GTP-bound translation factors. Is thus essential for accurate translation. This is Large ribosomal subunit protein bL12 from Synechococcus sp. (strain RCC307).